Here is a 343-residue protein sequence, read N- to C-terminus: Mas-related G-protein coupled receptor member F (343 aa).

At 1–44 the chain is on the extracellular side; sequence MAGNCSWEAHSTNQNKMCPGMSEARELYSRGFLTIEQIATLPPP. Asparagine 4 carries an N-linked (GlcNAc...) asparagine glycan. A helical transmembrane segment spans residues 45 to 66; that stretch reads AVTNYIFLLLCLCGLVGNGLVL. Residues 67-82 lie on the Cytoplasmic side of the membrane; sequence WFFGFSIKRTPFSIYF. The chain crosses the membrane as a helical span at residues 83–104; that stretch reads LHLASADGMYLFSKAVIALLNM. The Extracellular portion of the chain corresponds to 105–123; it reads GTFLGSFPDYIRRVSRIVG. A helical membrane pass occupies residues 124–144; the sequence is LCTFFTGVSLLPAISIERCVS. Over 145–160 the chain is Cytoplasmic; it reads VIFPTWYWRRRPKRLS. Residues 161-181 traverse the membrane as a helical segment; it reads AGVCALLWMLSFLVTSIHNYF. The Extracellular segment spans residues 182 to 198; sequence CMFLGHEAPGTVCRNMD. The helical transmembrane segment at 199-220 threads the bilayer; sequence IALGILLFFLFCPLMVLPCLAL. The Cytoplasmic portion of the chain corresponds to 221 to 241; that stretch reads ILHVECRARRRQRSAKLNHVV. The chain crosses the membrane as a helical span at residues 242–263; sequence LAIVSVFLVSSIYLGIDWFLFW. Residues 264–273 lie on the Extracellular side of the membrane; sequence VFQIPAPFPE. The chain crosses the membrane as a helical span at residues 274–294; it reads YVTDLCICINSSAKPIVYFLA. Topologically, residues 295–343 are cytoplasmic; the sequence is GRDKSQRLWEPLRVVFQRALRDGAEPGDAASSTPNTVTMEMQCPSGNAS. A disordered region spans residues 318 to 343; sequence AEPGDAASSTPNTVTMEMQCPSGNAS. Residues 324–343 show a composition bias toward polar residues; the sequence is ASSTPNTVTMEMQCPSGNAS.

This sequence belongs to the G-protein coupled receptor 1 family. Mas subfamily.

The protein resides in the cell membrane. Functionally, orphan receptor. May bind to a neuropeptide and may regulate nociceptor function and/or development, including the sensation or modulation of pain. The sequence is that of Mas-related G-protein coupled receptor member F (Mrgprf) from Mus musculus (Mouse).